Reading from the N-terminus, the 306-residue chain is Ornithine carbamoyltransferase (306 aa).

Residues S53 to T56, Q80, R104, and H131 to Q134 contribute to the carbamoyl phosphate site. L-ornithine-binding positions include N162, D219, and S223–M224. Residues C259 to L260 and R287 contribute to the carbamoyl phosphate site.

It belongs to the aspartate/ornithine carbamoyltransferase superfamily. OTCase family.

Its subcellular location is the cytoplasm. The catalysed reaction is carbamoyl phosphate + L-ornithine = L-citrulline + phosphate + H(+). It participates in amino-acid degradation; L-arginine degradation via ADI pathway; carbamoyl phosphate from L-arginine: step 2/2. In terms of biological role, reversibly catalyzes the transfer of the carbamoyl group from carbamoyl phosphate (CP) to the N(epsilon) atom of ornithine (ORN) to produce L-citrulline. The polypeptide is Ornithine carbamoyltransferase (Acinetobacter baumannii (strain AYE)).